The following is a 192-amino-acid chain: Elongation factor P (192 aa).

Belongs to the elongation factor P family.

It localises to the cytoplasm. It participates in protein biosynthesis; polypeptide chain elongation. Its function is as follows. Involved in peptide bond synthesis. Stimulates efficient translation and peptide-bond synthesis on native or reconstituted 70S ribosomes in vitro. Probably functions indirectly by altering the affinity of the ribosome for aminoacyl-tRNA, thus increasing their reactivity as acceptors for peptidyl transferase. The protein is Elongation factor P of Borrelia recurrentis (strain A1).